A 312-amino-acid chain; its full sequence is Methionyl-tRNA formyltransferase (312 aa).

109-112 (SLLP) serves as a coordination point for (6S)-5,6,7,8-tetrahydrofolate.

This sequence belongs to the Fmt family.

It catalyses the reaction L-methionyl-tRNA(fMet) + (6R)-10-formyltetrahydrofolate = N-formyl-L-methionyl-tRNA(fMet) + (6S)-5,6,7,8-tetrahydrofolate + H(+). Its function is as follows. Attaches a formyl group to the free amino group of methionyl-tRNA(fMet). The formyl group appears to play a dual role in the initiator identity of N-formylmethionyl-tRNA by promoting its recognition by IF2 and preventing the misappropriation of this tRNA by the elongation apparatus. This chain is Methionyl-tRNA formyltransferase, found in Listeria monocytogenes serovar 1/2a (strain ATCC BAA-679 / EGD-e).